The sequence spans 85 residues: Putative membrane protein insertion efficiency factor (85 aa).

This sequence belongs to the UPF0161 family.

It localises to the cell inner membrane. Functionally, could be involved in insertion of integral membrane proteins into the membrane. This is Putative membrane protein insertion efficiency factor from Dictyoglomus thermophilum (strain ATCC 35947 / DSM 3960 / H-6-12).